Reading from the N-terminus, the 129-residue chain is uncharacterized protein (129 aa).

This is an uncharacterized protein from Mycobacterium bovis (strain ATCC BAA-935 / AF2122/97).